The chain runs to 194 residues: Molybdenum cofactor guanylyltransferase (194 aa).

Residues 12 to 14 (LAG), K25, N53, D70, and D100 contribute to the GTP site. D100 is a binding site for Mg(2+).

It belongs to the MobA family. Monomer. It depends on Mg(2+) as a cofactor.

It is found in the cytoplasm. The enzyme catalyses Mo-molybdopterin + GTP + H(+) = Mo-molybdopterin guanine dinucleotide + diphosphate. Functionally, transfers a GMP moiety from GTP to Mo-molybdopterin (Mo-MPT) cofactor (Moco or molybdenum cofactor) to form Mo-molybdopterin guanine dinucleotide (Mo-MGD) cofactor. This chain is Molybdenum cofactor guanylyltransferase, found in Aliivibrio fischeri (strain ATCC 700601 / ES114) (Vibrio fischeri).